The chain runs to 366 residues: UDP-N-acetylenolpyruvoylglucosamine reductase (366 aa).

The 171-residue stretch at 27–197 (LGGPAAGFVV…LRVRFLLRDG (171 aa)) folds into the FAD-binding PCMH-type domain. Arginine 175 is a catalytic residue. The Proton donor role is filled by serine 252. Glutamate 358 is a catalytic residue.

This sequence belongs to the MurB family. It depends on FAD as a cofactor.

It localises to the cytoplasm. It catalyses the reaction UDP-N-acetyl-alpha-D-muramate + NADP(+) = UDP-N-acetyl-3-O-(1-carboxyvinyl)-alpha-D-glucosamine + NADPH + H(+). It functions in the pathway cell wall biogenesis; peptidoglycan biosynthesis. Its function is as follows. Cell wall formation. The protein is UDP-N-acetylenolpyruvoylglucosamine reductase of Saccharopolyspora erythraea (strain ATCC 11635 / DSM 40517 / JCM 4748 / NBRC 13426 / NCIMB 8594 / NRRL 2338).